A 311-amino-acid chain; its full sequence is Homeobox-leucine zipper protein HOX1 (311 aa).

Disordered regions lie at residues 29–69 (AGGA…SDHR) and 97–160 (AETT…KKLR). Low complexity predominate over residues 119-145 (SSPNSTLSSLSGKRGAPSAATAAAAAA). Residues 154-213 (GSRKKLRLSKDQAAVLEDTFKEHNTLNPKQKAALARQLNLKPRQVEVWFQNRRARTKLKQ) constitute a DNA-binding region (homeobox). Positions 212-256 (KQTEVDCELLKRCCETLTDENRRLHRELQELRALKLATAAAAPHH) are leucine-zipper. The interval 279 to 311 (SAATTTRNNSGAAPARPVPTRPWPPAAAQRSSA) is disordered. Residues 280-289 (AATTTRNNSG) show a composition bias toward polar residues. Positions 294 to 303 (RPVPTRPWPP) are enriched in pro residues.

The protein belongs to the HD-ZIP homeobox family. Class II subfamily. Homodimer. May form a heterodimer with HOX2, HOX3 or HOX7. In terms of tissue distribution, expressed in root provascular and vascular cylinder, provascular and vascular strands of leaves, provascular and vascular strands of the whole panicle, in mature embryo provascular bundles of scutellum and embryonic axis and provascular and vascular strands of young immature spikelet organs. Expressed in differentiating and differentiated xylem and phloem elements, and in outer and inner bundle sheath cells of all vascular bundles. Expressed in auricles, ligules, culm, guard cells brac hairs and pollen.

Its subcellular location is the nucleus. In terms of biological role, probable transcription repressor involved leaf development. Binds to the DNA sequence 5'-CAAT[GC]ATTG-3'. May act as a regulatory switch to specify provascular cell fate. This is Homeobox-leucine zipper protein HOX1 (HOX1) from Oryza sativa subsp. japonica (Rice).